Consider the following 120-residue polypeptide: Large ribosomal subunit protein eL34x (120 aa).

The tract at residues 31-50 (TYQTTNKRASGPKCPVTGKR) is disordered.

It belongs to the eukaryotic ribosomal protein eL34 family.

The sequence is that of Large ribosomal subunit protein eL34x (RPL34C) from Arabidopsis thaliana (Mouse-ear cress).